Consider the following 394-residue polypeptide: Elongation factor Tu (394 aa).

Positions 10–205 (KPHMNVGTIG…TMDNYFDLPE (196 aa)) constitute a tr-type G domain. The G1 stretch occupies residues 19–26 (GHVDHGKT). 19 to 26 (GHVDHGKT) is a GTP binding site. Thr-26 serves as a coordination point for Mg(2+). Positions 61 to 65 (GITIN) are G2. Residues 82–85 (DCPG) form a G3 region. GTP is bound by residues 82-86 (DCPGH) and 137-140 (NKLD). The tract at residues 137-140 (NKLD) is G4. Residues 173 to 175 (SAF) form a G5 region.

It belongs to the TRAFAC class translation factor GTPase superfamily. Classic translation factor GTPase family. EF-Tu/EF-1A subfamily. In terms of assembly, monomer.

It is found in the cytoplasm. The enzyme catalyses GTP + H2O = GDP + phosphate + H(+). In terms of biological role, GTP hydrolase that promotes the GTP-dependent binding of aminoacyl-tRNA to the A-site of ribosomes during protein biosynthesis. This Borrelia duttonii (strain Ly) protein is Elongation factor Tu.